The primary structure comprises 432 residues: MSKETKGNNNTSRVMSGYGGSLEANTLAMIDSTGAKDSRDANEDRLQYLEAVRAASLVPENGIPPTNKMYQAIFRILRFGKTLELITASFQLLTQLHQRFPWVYVSDSADQLDIVDEAWSPFNFGSDVDSDEKDLSVRSLFLQQLIQNMNKRVNESEESDLKILGNMFLFKYLAHVLKLDFTPRNQVYEETMNWSLLKESFLNLLLASRKVNFKLLMKDYLSTMCASIDADEKSISLVELHKDMLTAMKELLVMIMELDTSKKKADLEGITSRGDGVRTPAMEIILDELTYDGYLLSKFLQVFDDPKWKLEIVLQYLTKYIPKPVVRTRRTTVPQAEDSKTLNGILKTFSNGTNPKNITKKIGPDIVQILIGHAFLARLTFSDPHEGDSISEICSSIISAFTSLKRVDQKIEILPFGKEVLFTAGMVLKAKA.

Interacts with SSN2. Binds to NTL9/CBNAC to promote its binding to promoters of target genes. Component of the SMC5-SMC6 complex which consists at least of SMC5 and SMC6B. Interacts with RAD17. Expressed at low levels in the veins.

The protein localises to the nucleus. Functionally, component of the SMC5-SMC6 complex, a complex involved in repair of DNA double-strand breaks by homologous recombination. Transcription repressor that prevents expression of pathogenesis-related genes (PR) via histone modifications and binding negative cis-acting elements at their promoters. Negative regulator of hypersensitive response (HR) and systemic acquired resistance (SAR) required to dampen the basal expression of pathogenesis related (PR) genes. Functions synergistically with NTL9/CBNAC as negative regulator of pathogen-induced PR1 expression and basal resistance to a virulent strain of P.syringae. Binds to the PR1 gene promoter to suppress defense response in the absence of pathogen challenge and is removed in response to induction. Negatively regulates both gene expression and DNA recombination during pathogen infection, thus being involved in short-term defense response and a long-term survival strategy. Prevents effective immune responses that involve activation of DNA damage responses, probably by negatively regulating the DNA damage sensors RAD17 and ATR. Negative regulator of defenses against the beet cyst nematode H.schachtii. This is Negative regulator of systemic acquired resistance SNI1 from Arabidopsis thaliana (Mouse-ear cress).